Reading from the N-terminus, the 486-residue chain is ATP synthase subunit beta (486 aa).

Residue 164–171 coordinates ATP; sequence GGAGVGKT.

It belongs to the ATPase alpha/beta chains family. F-type ATPases have 2 components, CF(1) - the catalytic core - and CF(0) - the membrane proton channel. CF(1) has five subunits: alpha(3), beta(3), gamma(1), delta(1), epsilon(1). CF(0) has four main subunits: a(1), b(1), b'(1) and c(9-12).

It is found in the cellular thylakoid membrane. It carries out the reaction ATP + H2O + 4 H(+)(in) = ADP + phosphate + 5 H(+)(out). Functionally, produces ATP from ADP in the presence of a proton gradient across the membrane. The catalytic sites are hosted primarily by the beta subunits. In Prochlorococcus marinus (strain MIT 9515), this protein is ATP synthase subunit beta.